Reading from the N-terminus, the 116-residue chain is Large ribosomal subunit protein uL18 (116 aa).

It belongs to the universal ribosomal protein uL18 family. As to quaternary structure, part of the 50S ribosomal subunit; part of the 5S rRNA/L5/L18/L25 subcomplex. Contacts the 5S and 23S rRNAs.

Its function is as follows. This is one of the proteins that bind and probably mediate the attachment of the 5S RNA into the large ribosomal subunit, where it forms part of the central protuberance. The sequence is that of Large ribosomal subunit protein uL18 from Pseudomonas entomophila (strain L48).